The chain runs to 306 residues: Protoheme IX farnesyltransferase (306 aa).

The next 9 membrane-spanning stretches (helical) occupy residues 35 to 55 (LIVF…PTWL), 61 to 81 (LIAC…NCLV), 106 to 126 (LTLA…YVWV), 129 to 149 (LTMW…TVIL), 157 to 177 (IVIG…AMTG), 183 to 203 (ALIL…ALAL), 224 to 244 (EFTR…CLMP), 245 to 265 (FIFK…SIGF), and 286 to 306 (RFSL…HYLI).

It belongs to the UbiA prenyltransferase family. Protoheme IX farnesyltransferase subfamily.

Its subcellular location is the cell inner membrane. It catalyses the reaction heme b + (2E,6E)-farnesyl diphosphate + H2O = Fe(II)-heme o + diphosphate. It functions in the pathway porphyrin-containing compound metabolism; heme O biosynthesis; heme O from protoheme: step 1/1. Its function is as follows. Converts heme B (protoheme IX) to heme O by substitution of the vinyl group on carbon 2 of heme B porphyrin ring with a hydroxyethyl farnesyl side group. In Polaromonas naphthalenivorans (strain CJ2), this protein is Protoheme IX farnesyltransferase.